Reading from the N-terminus, the 271-residue chain is Cobalt import ATP-binding protein CbiO (271 aa).

In terms of domain architecture, ABC transporter spans L2–T236. G34–S41 lines the ATP pocket.

This sequence belongs to the ABC transporter superfamily. Cobalt importer (TC 3.A.1.18.1) family. As to quaternary structure, forms an energy-coupling factor (ECF) transporter complex composed of an ATP-binding protein (A component, CbiO), a transmembrane protein (T component, CbiQ) and 2 possible substrate-capture proteins (S components, CbiM and CbiN) of unknown stoichimetry. Expression of just CbiMN in E.coli confers some cobalt uptake.

It localises to the cell inner membrane. It functions in the pathway cofactor biosynthesis; adenosylcobalamin biosynthesis. Its function is as follows. Part of the energy-coupling factor (ECF) transporter complex CbiMNOQ involved in cobalt import. The complex confers cobalt uptake upon expression in E.coli; can also transport nickel with a very low affinity. Presumably responsible for energy coupling to the transport system. The protein is Cobalt import ATP-binding protein CbiO of Salmonella typhimurium (strain LT2 / SGSC1412 / ATCC 700720).